Here is a 457-residue protein sequence, read N- to C-terminus: RuvB-like helicase 1 (457 aa).

73 to 80 (GGPSTGKT) is an ATP binding site.

This sequence belongs to the RuvB family. In terms of assembly, may form heterododecamers with RVB2. Component of the SWR1 chromatin remodeling complex, the INO80 chromatin remodeling complex, and of the R2TP complex.

It localises to the nucleus. The enzyme catalyses ATP + H2O = ADP + phosphate + H(+). Its function is as follows. DNA helicase which participates in several chromatin remodeling complexes, including the SWR1 and the INO80 complexes. The SWR1 complex mediates the ATP-dependent exchange of histone H2A for the H2A variant HZT1 leading to transcriptional regulation of selected genes by chromatin remodeling. The INO80 complex remodels chromatin by shifting nucleosomes and is involved in DNA repair. Also involved in pre-rRNA processing. In Kluyveromyces lactis (strain ATCC 8585 / CBS 2359 / DSM 70799 / NBRC 1267 / NRRL Y-1140 / WM37) (Yeast), this protein is RuvB-like helicase 1 (RVB1).